The chain runs to 120 residues: Photosystem II extrinsic protein U (120 aa).

The signal sequence occupies residues 1–29; the sequence is MKRLLSLLTGVLVMTGLLMALIFPQSAYA.

Belongs to the PsbU family. PSII is composed of 1 copy each of membrane proteins PsbA, PsbB, PsbC, PsbD, PsbE, PsbF, PsbH, PsbI, PsbJ, PsbK, PsbL, PsbM, PsbT, PsbX, PsbY, Psb30/Ycf12, peripheral proteins PsbO, CyanoQ (PsbQ), PsbU, PsbV and a large number of cofactors. It forms dimeric complexes.

It localises to the cellular thylakoid membrane. Its function is as follows. One of the extrinsic, lumenal subunits of photosystem II (PSII). PSII is a light-driven water plastoquinone oxidoreductase, using light energy to abstract electrons from H(2)O, generating a proton gradient subsequently used for ATP formation. The extrinsic proteins stabilize the structure of photosystem II oxygen-evolving complex (OEC), the ion environment of oxygen evolution and protect the OEC against heat-induced inactivation. The sequence is that of Photosystem II extrinsic protein U from Prochlorococcus marinus (strain MIT 9303).